Consider the following 125-residue polypeptide: Small ribosomal subunit protein uS13 (125 aa).

The interval 95–125 is disordered; it reads GLPVNGQRTRTNARTRKGGKKTVANKKKVTK. Basic residues predominate over residues 105–125; sequence TNARTRKGGKKTVANKKKVTK.

This sequence belongs to the universal ribosomal protein uS13 family. Part of the 30S ribosomal subunit. Forms a loose heterodimer with protein S19. Forms two bridges to the 50S subunit in the 70S ribosome.

Functionally, located at the top of the head of the 30S subunit, it contacts several helices of the 16S rRNA. In the 70S ribosome it contacts the 23S rRNA (bridge B1a) and protein L5 of the 50S subunit (bridge B1b), connecting the 2 subunits; these bridges are implicated in subunit movement. Contacts the tRNAs in the A and P-sites. In Leptospira borgpetersenii serovar Hardjo-bovis (strain L550), this protein is Small ribosomal subunit protein uS13.